A 491-amino-acid polypeptide reads, in one-letter code: Cytochrome P450 2F2 (491 aa).

Heme is bound at residue C436.

This sequence belongs to the cytochrome P450 family. It depends on heme as a cofactor. Club cells in lung and liver.

The protein localises to the endoplasmic reticulum membrane. It is found in the microsome membrane. Functionally, involved in the regio- and stereoselective transformation of naphthalene to trans-1R-hydroxy-2R-glutathionyl-1,2-dihydronaphthalene in the presence of glutathione and glutathione S-transferases. It specifically catalyzes the production of a very reactive and potentially toxic intermediate, the 2R,2S arene oxide, that is associated with necrosis of the unciliated bronchiolar epithelial cells or club cells in lung. In Mus musculus (Mouse), this protein is Cytochrome P450 2F2 (Cyp2f2).